The following is a 115-amino-acid chain: Anamorsin homolog 2 (115 aa).

A disordered region spans residues 30–115; that stretch reads VKEATKGEDC…KVKLNLTDDI (86 aa). [2Fe-2S] cluster is bound by residues Cys-39, Cys-46, Cys-49, and Cys-51. The interval 39–51 is fe-S binding site A; the sequence is CTTRRRACKNCTC. Positions 77, 80, 88, and 91 each coordinate [4Fe-4S] cluster. Short sequence motifs (cx2C motif) lie at residues 77–80 and 88–91; these read CGNC and CATC. The fe-S binding site B stretch occupies residues 77-91; that stretch reads CGNCAKGDAFRCATC.

It belongs to the anamorsin family. In terms of assembly, monomer. [2Fe-2S] cluster serves as cofactor. It depends on [4Fe-4S] cluster as a cofactor.

It localises to the cytoplasm. It is found in the mitochondrion intermembrane space. Component of the cytosolic iron-sulfur (Fe-S) protein assembly (CIA) machinery. Required for the maturation of extramitochondrial Fe-S proteins. Part of an electron transfer chain functioning in an early step of cytosolic Fe-S biogenesis, facilitating the de novo assembly of a [4Fe-4S] cluster on the cytosolic Fe-S scaffold complex. Electrons are transferred from NADPH via a FAD- and FMN-containing diflavin oxidoreductase. Together with the diflavin oxidoreductase, also required for the assembly of the diferric tyrosyl radical cofactor of ribonucleotide reductase (RNR), probably by providing electrons for reduction during radical cofactor maturation in the catalytic small subunit. The chain is Anamorsin homolog 2 from Trypanosoma cruzi (strain CL Brener).